The chain runs to 285 residues: Ribosomal RNA large subunit methyltransferase F (285 aa).

The protein belongs to the methyltransferase superfamily. METTL16/RlmF family.

The protein resides in the cytoplasm. The enzyme catalyses adenosine(1618) in 23S rRNA + S-adenosyl-L-methionine = N(6)-methyladenosine(1618) in 23S rRNA + S-adenosyl-L-homocysteine + H(+). Its function is as follows. Specifically methylates the adenine in position 1618 of 23S rRNA. In Christiangramia forsetii (strain DSM 17595 / CGMCC 1.15422 / KT0803) (Gramella forsetii), this protein is Ribosomal RNA large subunit methyltransferase F.